The chain runs to 255 residues: Sulfate transporter CysZ (255 aa).

Helical transmembrane passes span 26-46 (LFVLLPLAINLVLFVGLIYFA), 71-91 (LLWPLFVVLVVLMVFFTFTML), 150-170 (LFILSFIPVVNLIAAPLWLLF), and 211-231 (IVYLVLLVPVVNLLMMPAAVA).

It belongs to the CysZ family.

It localises to the cell inner membrane. High affinity, high specificity proton-dependent sulfate transporter, which mediates sulfate uptake. Provides the sulfur source for the cysteine synthesis pathway. The sequence is that of Sulfate transporter CysZ from Pseudomonas fluorescens (strain SBW25).